A 1025-amino-acid polypeptide reads, in one-letter code: Multidrug resistance protein MdtC (1025 aa).

The next 12 membrane-spanning stretches (helical) occupy residues 16–36, 333–353, 360–380, 387–407, 431–451, 459–479, 528–548, 853–873, 875–895, 897–917, 953–973, and 984–1004; these read LLTL…PVAP, EVEQ…FVFL, LIPA…MYLC, LSLM…IVVL, VGFT…PLLM, FFAE…FVSV, WVLL…ISIP, LWLM…LYES, VHPL…LLAL, LFDT…IGIV, PILM…LTSG, and ITIA…TPVV.

It belongs to the resistance-nodulation-cell division (RND) (TC 2.A.6) family. MdtC subfamily. Part of a tripartite efflux system composed of MdtA, MdtB and MdtC. MdtC forms a heteromultimer with MdtB.

Its subcellular location is the cell inner membrane. This Pantoea ananatis (strain AJ13355) protein is Multidrug resistance protein MdtC.